A 292-amino-acid polypeptide reads, in one-letter code: CCR4-NOT transcription complex subunit 8 (292 aa).

4 residues coordinate a divalent metal cation: Asp-40, Glu-42, Asp-161, and Asp-230.

It belongs to the CAF1 family. As to quaternary structure, component of the CCR4-NOT complex; distinct complexes seem to exist that differ in the participation of probably mutually exclusive catalytic subunits; the complex contains two deadenylase subunits, CNOT6 or CNOT6L, and CNOT7 or CNOT8. In the complex interacts directly with CNOT1. Interacts with BTG1, BTG2 and TOB1. Interacts with BTG4.

The protein resides in the cytoplasm. Its subcellular location is the nucleus. It catalyses the reaction Exonucleolytic cleavage of poly(A) to 5'-AMP.. Its function is as follows. Has 3'-5' poly(A) exoribonuclease activity for synthetic poly(A) RNA substrate. Its function seems to be partially redundant with that of CNOT7. Catalytic component of the CCR4-NOT complex which is linked to various cellular processes including bulk mRNA degradation, miRNA-mediated repression, translational repression during translational initiation and general transcription regulation. During miRNA-mediated repression the complex also seems to act as translational repressor during translational initiation. Additional complex functions may be a consequence of its influence on mRNA expression. Associates with members of the BTG family such as TOB1 and BTG2 and is required for their anti-proliferative activity. The polypeptide is CCR4-NOT transcription complex subunit 8 (Cnot8) (Mus musculus (Mouse)).